Reading from the N-terminus, the 514-residue chain is Photosystem II CP47 reaction center protein (514 aa).

A run of 6 helical transmembrane segments spans residues 21–36 (AVHL…WAGS), 109–123 (IVLS…VWHW), 148–164 (GGHL…FGTF), 211–226 (IAAG…FHLT), 245–260 (ALAS…AFVV), and 465–480 (CFAL…HGAR).

This sequence belongs to the PsbB/PsbC family. PsbB subfamily. In terms of assembly, PSII is composed of 1 copy each of membrane proteins PsbA, PsbB, PsbC, PsbD, PsbE, PsbF, PsbH, PsbI, PsbJ, PsbK, PsbL, PsbM, PsbT, PsbX, PsbY, PsbZ, Psb30/Ycf12, peripheral proteins PsbO, CyanoQ (PsbQ), PsbU, PsbV and a large number of cofactors. It forms dimeric complexes. It depends on Binds multiple chlorophylls. PSII binds additional chlorophylls, carotenoids and specific lipids. as a cofactor.

Its subcellular location is the cellular thylakoid membrane. Its function is as follows. One of the components of the core complex of photosystem II (PSII). It binds chlorophyll and helps catalyze the primary light-induced photochemical processes of PSII. PSII is a light-driven water:plastoquinone oxidoreductase, using light energy to abstract electrons from H(2)O, generating O(2) and a proton gradient subsequently used for ATP formation. This Prochlorothrix hollandica protein is Photosystem II CP47 reaction center protein.